The following is a 685-amino-acid chain: DNA ligase (685 aa).

Residues 47-51, 96-97, and E125 each bind NAD(+); these read DSEYD and SL. Residue K127 is the N6-AMP-lysine intermediate of the active site. The NAD(+) site is built by R148, E185, K304, and K328. 4 residues coordinate Zn(2+): C422, C425, C440, and C446. The region spanning 605–685 is the BRCT domain; sequence ADAQPLKGQT…ELLALLAANA (81 aa).

This sequence belongs to the NAD-dependent DNA ligase family. LigA subfamily. The cofactor is Mg(2+). Mn(2+) is required as a cofactor.

It carries out the reaction NAD(+) + (deoxyribonucleotide)n-3'-hydroxyl + 5'-phospho-(deoxyribonucleotide)m = (deoxyribonucleotide)n+m + AMP + beta-nicotinamide D-nucleotide.. DNA ligase that catalyzes the formation of phosphodiester linkages between 5'-phosphoryl and 3'-hydroxyl groups in double-stranded DNA using NAD as a coenzyme and as the energy source for the reaction. It is essential for DNA replication and repair of damaged DNA. This is DNA ligase from Shewanella baltica (strain OS195).